Here is a 531-residue protein sequence, read N- to C-terminus: Peptide chain release factor 3 (531 aa).

The region spanning 10–278 (RRRRTFAIIS…SLIDWAPAPK (269 aa)) is the tr-type G domain. GTP is bound by residues 19–26 (SHPDAGKT), 87–91 (DTPGH), and 141–144 (NKYD).

The protein belongs to the TRAFAC class translation factor GTPase superfamily. Classic translation factor GTPase family. PrfC subfamily.

The protein localises to the cytoplasm. Increases the formation of ribosomal termination complexes and stimulates activities of RF-1 and RF-2. It binds guanine nucleotides and has strong preference for UGA stop codons. It may interact directly with the ribosome. The stimulation of RF-1 and RF-2 is significantly reduced by GTP and GDP, but not by GMP. The sequence is that of Peptide chain release factor 3 from Neisseria gonorrhoeae (strain NCCP11945).